Consider the following 346-residue polypeptide: Probable aldo-keto reductase 2 (346 aa).

Tyr-63 serves as the catalytic Proton donor. Residue His-131 coordinates substrate. An NADP(+)-binding site is contributed by 210–220 (SPLGRGFLAAG).

Belongs to the aldo/keto reductase family. Aldo/keto reductase 13 subfamily.

The polypeptide is Probable aldo-keto reductase 2 (AGD2) (Arabidopsis thaliana (Mouse-ear cress)).